A 253-amino-acid polypeptide reads, in one-letter code: 4-hydroxy-tetrahydrodipicolinate reductase (253 aa).

NAD(+) is bound at residue 16 to 21; it reads GDTGRM. R44 lines the NADP(+) pocket. Residues 85–87 and 111–114 contribute to the NAD(+) site; these read GTT and CANT. The active-site Proton donor/acceptor is the H144. A (S)-2,3,4,5-tetrahydrodipicolinate-binding site is contributed by H145. K148 serves as the catalytic Proton donor. 154 to 155 contacts (S)-2,3,4,5-tetrahydrodipicolinate; the sequence is GT.

This sequence belongs to the DapB family.

Its subcellular location is the cytoplasm. It catalyses the reaction (S)-2,3,4,5-tetrahydrodipicolinate + NAD(+) + H2O = (2S,4S)-4-hydroxy-2,3,4,5-tetrahydrodipicolinate + NADH + H(+). The catalysed reaction is (S)-2,3,4,5-tetrahydrodipicolinate + NADP(+) + H2O = (2S,4S)-4-hydroxy-2,3,4,5-tetrahydrodipicolinate + NADPH + H(+). It functions in the pathway amino-acid biosynthesis; L-lysine biosynthesis via DAP pathway; (S)-tetrahydrodipicolinate from L-aspartate: step 4/4. In terms of biological role, catalyzes the conversion of 4-hydroxy-tetrahydrodipicolinate (HTPA) to tetrahydrodipicolinate. The polypeptide is 4-hydroxy-tetrahydrodipicolinate reductase (Chlamydia trachomatis serovar A (strain ATCC VR-571B / DSM 19440 / HAR-13)).